The primary structure comprises 223 residues: UPF0758 protein Plut_0598 (223 aa).

An MPN domain is found at 100-222 (RVQGAKDVFE…WFSFRESNLL (123 aa)). 3 residues coordinate Zn(2+): H171, H173, and D184. The short motif at 171 to 184 (HNHPSGDTEPSNAD) is the JAMM motif element.

The protein belongs to the UPF0758 family.

The protein is UPF0758 protein Plut_0598 of Chlorobium luteolum (strain DSM 273 / BCRC 81028 / 2530) (Pelodictyon luteolum).